Here is a 273-residue protein sequence, read N- to C-terminus: HTH-type transcriptional activator RhaS (273 aa).

Residues 174–272 (YQLLDWLQNN…SQSPRDLRSQ (99 aa)) enclose the HTH araC/xylS-type domain. 2 consecutive DNA-binding regions (H-T-H motif) follow at residues 191-212 (PELADRFALPLRTLHRQLKNKT) and 239-262 (VTDIAYLCGFGDSNHFSTLFKREF).

As to quaternary structure, binds DNA as a dimer.

It is found in the cytoplasm. In terms of biological role, activates expression of the rhaBAD and rhaT operons. The polypeptide is HTH-type transcriptional activator RhaS (Yersinia pseudotuberculosis serotype O:1b (strain IP 31758)).